A 460-amino-acid chain; its full sequence is C4-dicarboxylate transport protein (460 aa).

The next 9 helical transmembrane spans lie at serine 20–proline 40, leucine 56–methionine 76, tyrosine 88–valine 108, isoleucine 153–glycine 173, isoleucine 200–isoleucine 220, leucine 234–cysteine 254, valine 301–leucine 321, isoleucine 342–glycine 362, and isoleucine 364–isoleucine 384. The interval proline 438–valine 460 is disordered.

It belongs to the dicarboxylate/amino acid:cation symporter (DAACS) (TC 2.A.23) family.

Its subcellular location is the cell inner membrane. Functionally, responsible for the transport of dicarboxylates such as succinate, fumarate, and malate from the periplasm across the membrane. This Pseudomonas savastanoi pv. phaseolicola (strain 1448A / Race 6) (Pseudomonas syringae pv. phaseolicola (strain 1448A / Race 6)) protein is C4-dicarboxylate transport protein.